The chain runs to 403 residues: Mitochondrial intermembrane space import and assembly protein 40 (403 aa).

The N-terminal 31 residues, 1 to 31 (MLRNLVVRNACRNRPSIQVARGLCRHQTRRL), are a transit peptide targeting the mitochondrion. Over 33–46 (ASSPQFGRNSNQEK) the chain is Mitochondrial matrix. Residues 47–66 (TAGFIMGILSMAGALYFIAP) traverse the membrane as a helical; Signal-anchor for type II membrane protein segment. Over 67–403 (NRKPLFASRK…KEPLNEESKP (337 aa)) the chain is Mitochondrial intermembrane. Basic and acidic residues-rich tracts occupy residues 75–84 (RKVESDKTAE), 101–118 (NNSKSDENGDDNDSKNDE), 147–168 (EDNKSSEDKDTDESKVSTKDDE), 206–230 (SEKKDPEHSDDEKSQQGQSDDKTTT), and 262–271 (EELRKQEEKQ). Positions 75-292 (RKVESDKTAE…GAYNPDTGEI (218 aa)) are disordered. 3 disulfides stabilise this stretch: C296/C298, C307/C340, and C317/C330. One can recognise a CHCH domain in the interval 304–348 (HGPCGEEFKSAFSCFVYSEAEPKGIDCVEKFQHMQDCFRKYPEHY). 2 consecutive short sequence motifs (cx9C motif) follow at residues 307-317 (CGEEFKSAFSC) and 330-340 (CVEKFQHMQDC). The disordered stretch occupies residues 351–403 (QLKETSDDEEPQDKVKVNTIESAPNVSSAKENAAKKAEQSDVKKEPLNEESKP). The segment covering 369 to 378 (TIESAPNVSS) has biased composition (polar residues). Over residues 382 to 403 (NAAKKAEQSDVKKEPLNEESKP) the composition is skewed to basic and acidic residues.

Monomer. Interacts with the FAD-linked sulfhydryl oxidase ERV1 and with the substrate proteins COX17, TIM9, and TIM13, forming transient intermolecular disulfide bridges. Interacts with FCJ1. Requires Cu(2+) as cofactor. Zn(2+) serves as cofactor.

The protein resides in the mitochondrion inner membrane. Required for the import and folding of small cysteine-containing proteins (small Tim) in the mitochondrial intermembrane space (IMS). Forms a redox cycle with ERV1 that involves a disulfide relay system. Precursor proteins to be imported into the IMS are translocated in their reduced form into the mitochondria. The oxidized form of MIA40 forms a transient intermolecular disulfide bridge with the reduced precursor protein, resulting in oxidation of the precursor protein that now contains an intramolecular disulfide bond and is able to undergo folding in the IMS. Reduced MIA40 is reoxidized by FAD-linked sulfhydryl oxidase ERV1. This chain is Mitochondrial intermembrane space import and assembly protein 40 (MIA40), found in Saccharomyces cerevisiae (strain ATCC 204508 / S288c) (Baker's yeast).